The primary structure comprises 398 residues: NADH dehydrogenase [ubiquinone] iron-sulfur protein 2 (398 aa).

Positions 261, 267, and 282 each coordinate [4Fe-4S] cluster.

It belongs to the complex I 49 kDa subunit family. As to quaternary structure, complex I is composed of about 45 different subunits. This is a component of the iron-sulfur (IP) fragment of the enzyme. [4Fe-4S] cluster serves as cofactor.

Its subcellular location is the mitochondrion. It catalyses the reaction a ubiquinone + NADH + 5 H(+)(in) = a ubiquinol + NAD(+) + 4 H(+)(out). In terms of biological role, core subunit of the mitochondrial membrane respiratory chain NADH dehydrogenase (Complex I) that is believed to belong to the minimal assembly required for catalysis. Complex I functions in the transfer of electrons from NADH to the respiratory chain. The immediate electron acceptor for the enzyme is believed to be ubiquinone. Component of the iron-sulfur (IP) fragment of the enzyme. This chain is NADH dehydrogenase [ubiquinone] iron-sulfur protein 2 (NAD7), found in Nephroselmis olivacea (Green alga).